A 160-amino-acid chain; its full sequence is Protein-export protein SecB (160 aa).

This sequence belongs to the SecB family. Homotetramer, a dimer of dimers. One homotetramer interacts with 1 SecA dimer.

Its subcellular location is the cytoplasm. Functionally, one of the proteins required for the normal export of preproteins out of the cell cytoplasm. It is a molecular chaperone that binds to a subset of precursor proteins, maintaining them in a translocation-competent state. It also specifically binds to its receptor SecA. The polypeptide is Protein-export protein SecB (Nitrosomonas eutropha (strain DSM 101675 / C91 / Nm57)).